A 148-amino-acid chain; its full sequence is Large ribosomal subunit protein uL15 (148 aa).

Residues 1–30 show a composition bias toward basic residues; it reads MPSRLRKTRKLRGHVSHGHGRIGKHRKHPG. The segment at 1–37 is disordered; the sequence is MPSRLRKTRKLRGHVSHGHGRIGKHRKHPGGRGNAGG. The residue at position 39 (His39) is a (3S)-3-hydroxyhistidine. N6-acetyllysine occurs at positions 47 and 55. Ser68 carries the phosphoserine modification. Lys110 carries the post-translational modification N6-acetyllysine.

Belongs to the universal ribosomal protein uL15 family. In terms of assembly, component of the large ribosomal subunit. Post-translationally, hydroxylated on His-39 by MINA.

The protein resides in the cytoplasm. In terms of biological role, component of the large ribosomal subunit. The ribosome is a large ribonucleoprotein complex responsible for the synthesis of proteins in the cell. The protein is Large ribosomal subunit protein uL15 (RPL27A) of Bos taurus (Bovine).